Here is a 348-residue protein sequence, read N- to C-terminus: Dihydroorotase (348 aa).

Residues H13 and H15 each contribute to the Zn(2+) site. Residues 15–17 (HLR) and N41 each bind substrate. K99, H136, and H174 together coordinate Zn(2+). K99 carries the N6-carboxylysine modification. H136 serves as a coordination point for substrate. Position 219 (L219) interacts with substrate. Residue D247 coordinates Zn(2+). D247 is a catalytic residue. Substrate-binding residues include H251 and A263.

Belongs to the metallo-dependent hydrolases superfamily. DHOase family. Class II DHOase subfamily. Homodimer. Zn(2+) is required as a cofactor.

The catalysed reaction is (S)-dihydroorotate + H2O = N-carbamoyl-L-aspartate + H(+). The protein operates within pyrimidine metabolism; UMP biosynthesis via de novo pathway; (S)-dihydroorotate from bicarbonate: step 3/3. Functionally, catalyzes the reversible cyclization of carbamoyl aspartate to dihydroorotate. The sequence is that of Dihydroorotase from Coxiella burnetii (strain RSA 331 / Henzerling II).